A 620-amino-acid chain; its full sequence is Glutathione-regulated potassium-efflux system protein KefC (620 aa).

A run of 12 helical transmembrane segments spans residues 4-24 (HTLMQALIYLGSAALIVPIAV), 26-46 (LGLGSVLGYLIAGCIIGPWGL), 54-74 (SILHFAEIGVVLMLFVIGLEL), 90-110 (GALQMVICGGLIGFFCMFLGL), 114-134 (VAELIGMTLALSSTAIAMQAM), 149-169 (FAVLLFQDIAAIPLVAMIPLL), 178-198 (LGAFALSALKVAGALALVVLL), 218-238 (VFSAVALFLVFGFGLLLEEVG), 270-290 (GLLLGLFFIGVGMSIDFGTLV), 294-314 (LRILLLLAGFLAIKIVMLWLI), 327-347 (WFAVLLGQGSEFAFVVFGAAQ), and 359-379 (ALTLAVALSMAATPIFLVLLT). The RCK N-terminal domain occupies 399–518 (QPRVIVAGFG…AGVAMPERET (120 aa)). The segment at 599-620 (QGTAEGKHTGDIADEPQVKPST) is disordered.

This sequence belongs to the monovalent cation:proton antiporter 2 (CPA2) transporter (TC 2.A.37) family. KefC subfamily. In terms of assembly, homodimer. Interacts with the regulatory subunit KefF.

Its subcellular location is the cell inner membrane. Pore-forming subunit of a potassium efflux system that confers protection against electrophiles. Catalyzes K(+)/H(+) antiport. The sequence is that of Glutathione-regulated potassium-efflux system protein KefC from Salmonella arizonae (strain ATCC BAA-731 / CDC346-86 / RSK2980).